The chain runs to 63 residues: Kurtoxin-like II (63 aa).

The 61-residue stretch at 2 to 62 (IDGYPVDYWN…ARIKRSGRCR (61 aa)) folds into the LCN-type CS-alpha/beta domain. 4 disulfide bridges follow: Cys12–Cys61, Cys16–Cys37, Cys23–Cys44, and Cys27–Cys46.

Belongs to the long (4 C-C) scorpion toxin superfamily. Sodium channel inhibitor family. Alpha subfamily. Expressed by the venom gland.

The protein localises to the secreted. Functionally, this neurotoxin acts on sodium and calcium channels. Potently inhibits native voltage-gated T-type calcium channel activity in mouse male germ cells. Also binds Cav3.1/CACNA1G, Cav3.2/CACNA1H, and Cav3.3/CACNA1I T-type calcium channels and inhibits the channels by modifying voltage-dependent gating. In addition, binds and significantly inhibits the inactivation of activated sodium channels (Nav1.2/SCN2A and Nav1.5/SCN5A). The sequence is that of Kurtoxin-like II from Parabuthus granulatus (Granulated thick-tailed scorpion).